The sequence spans 699 residues: Nucleolar and coiled-body phosphoprotein 1 (699 aa).

Residues 10-42 enclose the LisH domain; it reads VPSDLYPLVLGFLRDNQLSEVANKFAKATGATQ. Lys-33 is modified (N6-acetyllysine). Positions 65-637 are disordered; it reads ERKLQANGPV…VREEEIEVDS (573 aa). Glycyl lysine isopeptide (Lys-Gly) (interchain with G-Cter in SUMO2) cross-links involve residues Lys-67 and Lys-76. An Acidic serine cluster 1 repeat occupies 84–95; that stretch reads SSDSEDSSEEEE. The segment at 84-566 is 11 X 12 AA approximate repeats of an acidic serine cluster; sequence SSDSEDSSEE…GKAAKNSEEE (483 aa). The segment covering 86 to 97 has biased composition (acidic residues); the sequence is DSEDSSEEEEEV. Phosphoserine is present on residues Ser-87, Ser-90, and Ser-91. Ser-91 carries the diphosphoserine modification. Positions 100–110 are enriched in low complexity; sequence PPAKKAAVPAK. Residues 125–136 form an Acidic serine cluster 2 repeat; that stretch reads ESSSSEESSDDD. Residues 144–159 show a composition bias toward low complexity; it reads QPVQKGVKPQAKAAKA. One copy of the Acidic serine cluster 3 repeat lies at 167-178; sequence SDSDSDSSSEDE. Lys-186 participates in a covalent cross-link: Glycyl lysine isopeptide (Lys-Gly) (interchain with G-Cter in SUMO2). Position 188 is a phosphothreonine (Thr-188). Residue Lys-193 forms a Glycyl lysine isopeptide (Lys-Gly) (interchain with G-Cter in SUMO2) linkage. Low complexity-rich tracts occupy residues 193–227 and 236–261; these read KAQTKAPPKPARAAPKIANGKAASSSSSSSSSSSS and AATPKKTVPKKQVVAKAPVKAATTPT. Positions 204 to 382 are interaction with RPA194; sequence RAAPKIANGK…DDEAPSKPAG (179 aa). An Acidic serine cluster 4 repeat occupies 221 to 232; sequence SSSSSSSDDSEE. Residues 264-275 form an Acidic serine cluster 5 repeat; sequence SSSSEDSSSDEE. The segment covering 291 to 301 has biased composition (pro residues); that stretch reads SVPPPSAPPPK. Residues 321–333 show a composition bias toward acidic residues; that stretch reads SSEDSSDESDSSS. An Acidic serine cluster 6 repeat occupies 325 to 336; sequence SSDESDSSSEEE. Glycyl lysine isopeptide (Lys-Gly) (interchain with G-Cter in SUMO2) cross-links involve residues Lys-342 and Lys-347. Phosphoserine occurs at positions 362, 363, and 366. One copy of the Acidic serine cluster 7 repeat lies at 363–375; the sequence is SDSSDSDSSEDDE. The segment covering 366-375 has biased composition (acidic residues); it reads SDSDSSEDDE. A compositionally biased stretch (polar residues) spans 381 to 397; it reads AGTTKNSSNKPAVTTKS. Glycyl lysine isopeptide (Lys-Gly) (interchain with G-Cter in SUMO2) cross-links involve residues Lys-390 and Lys-396. At Ser-397 the chain carries Phosphoserine. The segment covering 398 to 409 has biased composition (low complexity); it reads PAVKPAAAPKQP. Glycyl lysine isopeptide (Lys-Gly) (interchain with G-Cter in SUMO2) cross-links involve residues Lys-401 and Lys-407. At Lys-415 the chain carries N6-acetyllysine; alternate. Lys-415 is covalently cross-linked (Glycyl lysine isopeptide (Lys-Gly) (interchain with G-Cter in SUMO1); alternate). A Glycyl lysine isopeptide (Lys-Gly) (interchain with G-Cter in SUMO2); alternate cross-link involves residue Lys-415. Residues 425–436 form an Acidic serine cluster 8 repeat; the sequence is SSEEESSSSEEE. Glycyl lysine isopeptide (Lys-Gly) (interchain with G-Cter in SUMO2) cross-links involve residues Lys-440 and Lys-452. 2 stretches are compositionally biased toward low complexity: residues 441–476 and 498–523; these read MVATTKPKATAKAALSLPAKQAPQGSRDSSSDSDSS and AGGAAPSKPASAKKGKAESSNSSSSD. Residue Ser-456 is modified to Phosphoserine. One copy of the Acidic serine cluster 9 repeat lies at 470 to 481; that stretch reads SSDSDSSSSEEE. Lys-505 is covalently cross-linked (Glycyl lysine isopeptide (Lys-Gly) (interchain with G-Cter in SUMO2)). A Phosphoserine modification is found at Ser-508. An Acidic serine cluster 10 repeat occupies 519–529; the sequence is SSSSDDSSEEE. Ser-538 bears the Phosphoserine mark. The segment covering 547-556 has biased composition (polar residues); it reads NGTSALTAQN. Residues 555-566 form an Acidic serine cluster 11 repeat; the sequence is QNGKAAKNSEEE. Ser-563 carries the post-translational modification Phosphoserine. Lys-572 is covalently cross-linked (Glycyl lysine isopeptide (Lys-Gly) (interchain with G-Cter in SUMO1)). Residue Lys-579 forms a Glycyl lysine isopeptide (Lys-Gly) (interchain with G-Cter in SUMO2) linkage. Residues Ser-580 and Ser-582 each carry the phosphoserine modification. Lys-604 is covalently cross-linked (Glycyl lysine isopeptide (Lys-Gly) (interchain with G-Cter in SUMO2)). 2 positions are modified to phosphothreonine: Thr-607 and Thr-610. Lys-613 is covalently cross-linked (Glycyl lysine isopeptide (Lys-Gly) (interchain with G-Cter in SUMO2)). Residue Ser-622 is modified to Phosphoserine. Basic and acidic residues predominate over residues 627-637; that stretch reads RVREEEIEVDS. Ser-643 carries the post-translational modification Phosphoserine. A Glycyl lysine isopeptide (Lys-Gly) (interchain with G-Cter in SUMO2) cross-link involves residue Lys-647. Position 663 is an N6-acetyllysine; alternate (Lys-663). Residue Lys-663 forms a Glycyl lysine isopeptide (Lys-Gly) (interchain with G-Cter in SUMO2); alternate linkage. Arg-683 bears the Omega-N-methylarginine mark. Ser-686 carries the phosphoserine modification. A Glycyl lysine isopeptide (Lys-Gly) (interchain with G-Cter in SUMO2) cross-link involves residue Lys-695. Position 698 is a phosphoserine (Ser-698).

The protein belongs to the NOLC1 family. As to quaternary structure, heterodimer; heterodimerizes with TCOF1 following monoubiquitination. Interacts with RNA polymerase I 194 kDa subunit (RPA194) and with casein kinase-II. Interacts with DKC1/NAP57, NOP58 and fibrillarin. In terms of processing, undergoes rapid and massive phosphorylation/dephosphorylation cycles on CK2 and PKC sites. NOLC1 is one of the mostly phosphorylated proteins in the cell. Post-translationally, ubiquitinated. Monoubiquitination by the BCR(KBTBD8) complex promotes the formation of a NOLC1-TCOF1 complex that acts as a platform to connect RNA polymerase I with enzymes responsible for ribosomal processing and modification, leading to remodel the translational program of differentiating cells in favor of neural crest specification. Pyrophosphorylated by 5-diphosphoinositol pentakisphosphate (5-IP7). Serine pyrophosphorylation is achieved by Mg(2+)-dependent, but enzyme independent transfer of a beta-phosphate from a inositol pyrophosphate to a pre-phosphorylated serine residue.

The protein resides in the nucleus. Its subcellular location is the nucleolus. It localises to the cytoplasm. In terms of biological role, nucleolar protein that acts as a regulator of RNA polymerase I by connecting RNA polymerase I with enzymes responsible for ribosomal processing and modification. Required for neural crest specification: following monoubiquitination by the BCR(KBTBD8) complex, associates with TCOF1 and acts as a platform to connect RNA polymerase I with enzymes responsible for ribosomal processing and modification, leading to remodel the translational program of differentiating cells in favor of neural crest specification. Involved in nucleologenesis, possibly by playing a role in the maintenance of the fundamental structure of the fibrillar center and dense fibrillar component in the nucleolus. It has intrinsic GTPase and ATPase activities. This chain is Nucleolar and coiled-body phosphoprotein 1, found in Homo sapiens (Human).